A 160-amino-acid polypeptide reads, in one-letter code: MANKEHRVKQSLGLLEVCGLALAISCADIMAKSASITLLALEKTNGSGWMVIKITGDVASVQAAITTGAHFAEQWNGLVAHKVIARPGEGILLAETPSPSVIEPEPEASEIADVVSEAPAEEAPQESELVSCNLCLDPKCPRQKGEPRTLCIHSGKRGEA.

Residues serine 11 to threonine 96 enclose the BMC domain.

It belongs to the bacterial microcompartments protein family. In terms of assembly, interacts with shell proteins PduA and PduP and assembly protein PduM. Fe cation is required as a cofactor.

It localises to the bacterial microcompartment. It functions in the pathway polyol metabolism; 1,2-propanediol degradation. Functionally, a minor shell protein of the bacterial microcompartment (BMC) dedicated to 1,2-propanediol (1,2-PD) degradation. The isolated BMC shell component protein ratio for J:A:B':B:K:T:U is approximately 15:10:7:6:1:1:2. Not required for structural integrity of BMCs nor to mitigate propionaldehyde toxicity, it might be involved in spatial organization of BMCs. The 1,2-PD-specific bacterial microcompartment (BMC) concentrates low levels of 1,2-PD catabolic enzymes, concentrates volatile reaction intermediates thus enhancing pathway flux and keeps the level of toxic, mutagenic propionaldehyde low. This Salmonella typhimurium (strain LT2 / SGSC1412 / ATCC 700720) protein is Bacterial microcompartment shell protein PduK.